The following is a 1053-amino-acid chain: Protein CLEC16A (1053 aa).

Positions 51–198 (IRSITEILIW…AVRTITLNVY (148 aa)) constitute an FPL domain. 3 disordered regions span residues 375–434 (SLEM…GESE), 452–471 (STSV…AATC), and 892–983 (SSPS…SPSL). A compositionally biased stretch (basic residues) spans 381–392 (HKGKRRVQKRPN). Residues 892–938 (SSPSLSSQSPPSASGSPSGSGSTSHCDSGGTSSSSTPSTAQSPADAP) are compositionally biased toward low complexity.

Belongs to the CLEC16A/gop-1 family. Interacts with RNF41/NRDP1. Almost exclusively expressed in immune cells, including dendritic cells, B-lymphocytes and natural killer cells.

Its subcellular location is the endosome membrane. It is found in the lysosome membrane. Regulator of mitophagy through the upstream regulation of the RNF41/NRDP1-PRKN pathway. Mitophagy is a selective form of autophagy necessary for mitochondrial quality control. The RNF41/NRDP1-PRKN pathway regulates autophagosome-lysosome fusion during late mitophagy. May protect RNF41/NRDP1 from proteasomal degradation, RNF41/NRDP1 which regulates proteasomal degradation of PRKN. Plays a key role in beta cells functions by regulating mitophagy/autophagy and mitochondrial health. The polypeptide is Protein CLEC16A (Homo sapiens (Human)).